An 893-amino-acid polypeptide reads, in one-letter code: Translation initiation factor IF-2 (893 aa).

2 disordered regions span residues 135–169 (KAKA…KAEE) and 201–300 (ENEK…ESMD). The span at 201 to 224 (ENEKRWAEEEKARKEAEKTVDHHV) shows a compositional bias: basic and acidic residues. The span at 251 to 265 (PSANAGNNANANAGA) shows a compositional bias: low complexity. The region spanning 393-562 (SRAPVVTIMG…LLEAEVLELK (170 aa)) is the tr-type G domain. The interval 402 to 409 (GHVDHGKT) is G1. 402–409 (GHVDHGKT) contacts GTP. Residues 427 to 431 (GITQH) are G2. The interval 448-451 (DTPG) is G3. GTP contacts are provided by residues 448–452 (DTPGH) and 502–505 (NKMD). A G4 region spans residues 502 to 505 (NKMD). A G5 region spans residues 538 to 540 (SAK).

The protein belongs to the TRAFAC class translation factor GTPase superfamily. Classic translation factor GTPase family. IF-2 subfamily.

It is found in the cytoplasm. One of the essential components for the initiation of protein synthesis. Protects formylmethionyl-tRNA from spontaneous hydrolysis and promotes its binding to the 30S ribosomal subunits. Also involved in the hydrolysis of GTP during the formation of the 70S ribosomal complex. The sequence is that of Translation initiation factor IF-2 from Shewanella halifaxensis (strain HAW-EB4).